We begin with the raw amino-acid sequence, 62 residues long: Large ribosomal subunit protein eL24 (62 aa).

The Zn(2+) site is built by Cys-6, Cys-9, Cys-32, and Cys-36. The C4-type zinc-finger motif lies at 6 to 36 (CSFCEGKIEPGCGKKYVKKDGSVMQFCSSKC).

Belongs to the eukaryotic ribosomal protein eL24 family. Part of the 50S ribosomal subunit. Forms a cluster with proteins L3 and L14. Requires Zn(2+) as cofactor.

Functionally, binds to the 23S rRNA. This is Large ribosomal subunit protein eL24 from Methanococcus vannielii (strain ATCC 35089 / DSM 1224 / JCM 13029 / OCM 148 / SB).